Reading from the N-terminus, the 460-residue chain is UDP-glucuronate 4-epimerase 6 (460 aa).

The next 2 membrane-spanning stretches (helical) occupy residues 41–61 and 111–131; these read ATLLVALVLVLIFAINYPPLS and GLSVLVTGAAGFVGSHCSLAL. An NAD(+)-binding site is contributed by 113–144; the sequence is SVLVTGAAGFVGSHCSLALRKRGDGVLGFDNF. The active-site Proton acceptor is the Tyr-263.

Belongs to the NAD(P)-dependent epimerase/dehydratase family. In terms of assembly, homodimer. As to expression, in roots, leaf veins, siliques, flowers, pollen and stems.

Its subcellular location is the golgi apparatus. It is found in the golgi stack membrane. The enzyme catalyses UDP-alpha-D-glucuronate = UDP-alpha-D-galacturonate. Its function is as follows. Involved in the synthesis of the negatively charged monosaccharide that forms the backbone of pectic cell wall components. The protein is UDP-glucuronate 4-epimerase 6 (GAE6) of Arabidopsis thaliana (Mouse-ear cress).